The chain runs to 339 residues: MEQLQNLIRDALKAIDGATDTQALDALRVQYLGKKGVLTEQLKALGKLPPEERPAAGQAINRAKETVNEALSARLEALSAAEQEARLALESVDVTLPGRRQAVGGLHPVTRTIERITDLLGQLGFQVAEGPEVEDDYHNFEALNIPAHHPARAMHDTFYFDANRLLRTHTSPVQVRVMEQGRPPFRVIAPGRVYRCDSDLTHSPMFHQVEGLLVDEGVTFAHLRGVLDAFLQAFFEQSELKTRFRPSYFPFTEPSAEVDIQCVHCGGDGCRVCSHTGWLEVMGCGMVHPNVFAHVGIDSERYTGFAFGLGVERMAMLRYGVNDLRLFFENDVRFLRQFA.

Residue Glu253 coordinates Mg(2+).

Belongs to the class-II aminoacyl-tRNA synthetase family. Phe-tRNA synthetase alpha subunit type 1 subfamily. Tetramer of two alpha and two beta subunits. The cofactor is Mg(2+).

The protein localises to the cytoplasm. It carries out the reaction tRNA(Phe) + L-phenylalanine + ATP = L-phenylalanyl-tRNA(Phe) + AMP + diphosphate + H(+). This is Phenylalanine--tRNA ligase alpha subunit from Thioalkalivibrio sulfidiphilus (strain HL-EbGR7).